A 548-amino-acid polypeptide reads, in one-letter code: Membrane protein insertase YidC (548 aa).

The helical transmembrane segment at 6-26 (NLLVIALLFVSFMIWQAWEQD) threads the bilayer. Positions 28 to 55 (NPQPQAQQTTQTTTTAAGSAADQGVPAS) are disordered. A compositionally biased stretch (low complexity) spans 30–50 (QPQAQQTTQTTTTAAGSAADQ). A run of 4 helical transmembrane segments spans residues 350-370 (FVGN…GIMY), 420-440 (LGGC…YYML), 458-478 (LSAQ…MFFI), and 499-519 (PVIF…YYIV).

Belongs to the OXA1/ALB3/YidC family. Type 1 subfamily. Interacts with the Sec translocase complex via SecD. Specifically interacts with transmembrane segments of nascent integral membrane proteins during membrane integration.

It localises to the cell inner membrane. In terms of biological role, required for the insertion and/or proper folding and/or complex formation of integral membrane proteins into the membrane. Involved in integration of membrane proteins that insert both dependently and independently of the Sec translocase complex, as well as at least some lipoproteins. Aids folding of multispanning membrane proteins. In Shigella flexneri, this protein is Membrane protein insertase YidC.